Reading from the N-terminus, the 322-residue chain is Arginase-1 (322 aa).

The span at 1-12 shows a compositional bias: low complexity; that stretch reads MSSKSKSIGIIG. The interval 1–26 is disordered; that stretch reads MSSKSKSIGIIGAPFSKGQPRGGVEE. Residue serine 7 is modified to Phosphoserine. N6-succinyllysine is present on lysine 17. Serine 62 is subject to Phosphoserine. Residues histidine 101, aspartate 124, histidine 126, and aspartate 128 each coordinate Mn(2+). Substrate-binding positions include 126-130 and 137-139; these read HTDIN and SGN. Serine 163 bears the Phosphoserine mark. Aspartate 183 contacts substrate. Mn(2+)-binding residues include aspartate 232 and aspartate 234. Threonine 246 and glutamate 277 together coordinate substrate.

It belongs to the arginase family. As to quaternary structure, homotrimer. Interacts with CMTM6. Requires Mn(2+) as cofactor.

It is found in the cytoplasm. It catalyses the reaction L-arginine + H2O = urea + L-ornithine. Its pathway is nitrogen metabolism; urea cycle; L-ornithine and urea from L-arginine: step 1/1. The chain is Arginase-1 (ARG1) from Oryctolagus cuniculus (Rabbit).